We begin with the raw amino-acid sequence, 1499 residues long: Streptococcal surface protein B (1499 aa).

An N-terminal signal peptide occupies residues 1–37; sequence MQKREVFGFRKSKVAKTLCGAVLGAALIAIADQQVLA. Residues 50 to 84 are disordered; the sequence is AVTTTGNPATNLPEAQGEATEAASQSQAQAGSKDG. Ag I/II A repeat units lie at residues 145 to 219, 220 to 301, 302 to 383, and 384 to 465; these read KKTT…QKAN, EDSQ…KKAK, EDND…KQAN, and ATNE…KKDF. Disordered regions lie at residues 689-709, 763-907, and 1409-1472; these read YADSSNAEKSRGARWDTSEWD, TAPT…TPPV, and RTTT…TGTN. Over residues 694–705 the composition is skewed to basic and acidic residues; that stretch reads NAEKSRGARWDT. Residues 789-799 are compositionally biased toward pro residues; sequence PTPPVKTPDQP. Over residues 800-815 the composition is skewed to basic and acidic residues; that stretch reads EPSKPEEPTYETEKPL. The segment covering 828 to 838 has biased composition (pro residues); it reads PTPPVKIPDQP. The span at 839-854 shows a compositional bias: basic and acidic residues; sequence EPSKPEEPTYETEKPL. Composition is skewed to pro residues over residues 867–877 and 888–907; these read PTPPVKTPDQP and DPLPTPPLAPTPKQLPTPPV. Over residues 1428–1450 the composition is skewed to basic and acidic residues; it reads KPKDPDKPETPKEPKVPSPKVED. An LPXTG sorting signal motif is present at residues 1466–1470; sequence LPKTG. Thr-1469 carries the post-translational modification Pentaglycyl murein peptidoglycan amidated threonine. Positions 1470–1499 are cleaved as a propeptide — removed by sortase; the sequence is GTNDATYMPYLGLAALVGFLGLGLAKRKED.

The protein belongs to the antigen I/II family.

It is found in the secreted. The protein resides in the cell wall. Its subcellular location is the cell surface. Functionally, adhesin that mediates binding of bacteria to a variety of host cells. Plays a role in the bacterial invasion of dentinal tubules. A host immunostimulatory component, it modulates the innate immunity response. Plays a protective role against some antibiotics and cationic antimicrobial peptides (histatin-5, HTN3, but not beta-defensin 4A, DEFB4A). The polypeptide is Streptococcal surface protein B (Streptococcus gordonii (strain Challis / ATCC 35105 / BCRC 15272 / CH1 / DL1 / V288)).